The chain runs to 504 residues: Arabinose import ATP-binding protein AraG (504 aa).

ABC transporter domains are found at residues 8–243 (LSFR…MVGR) and 256–499 (YGEE…MPKV). An ATP-binding site is contributed by 40-47 (GENGAGKS).

This sequence belongs to the ABC transporter superfamily. Arabinose importer (TC 3.A.1.2.2) family. In terms of assembly, the complex is composed of two ATP-binding proteins (AraG), two transmembrane proteins (AraH) and a solute-binding protein (AraF).

Its subcellular location is the cell inner membrane. The enzyme catalyses L-arabinose(out) + ATP + H2O = L-arabinose(in) + ADP + phosphate + H(+). Its function is as follows. Part of the ABC transporter complex AraFGH involved in arabinose import. Responsible for energy coupling to the transport system. The polypeptide is Arabinose import ATP-binding protein AraG (Escherichia coli (strain UTI89 / UPEC)).